The sequence spans 220 residues: Small ribosomal subunit protein eS1 (220 aa).

It belongs to the eukaryotic ribosomal protein eS1 family.

This is Small ribosomal subunit protein eS1 from Pyrobaculum arsenaticum (strain DSM 13514 / JCM 11321 / PZ6).